Here is a 391-residue protein sequence, read N- to C-terminus: Acridone synthase 2 (391 aa).

Residue Cys164 is part of the active site.

It belongs to the thiolase-like superfamily. Chalcone/stilbene synthases family. As to quaternary structure, homodimer.

The catalysed reaction is N-methylanthraniloyl-CoA + 3 malonyl-CoA + 3 H(+) = 1,3-dihydroxy-N-methylacridone + 3 CO2 + 4 CoA + H2O. In Ruta graveolens (Common rue), this protein is Acridone synthase 2 (ACS2).